The chain runs to 651 residues: p-hydroxybenzoic acid efflux pump subunit AaeB (651 aa).

11 consecutive transmembrane segments (helical) span residues 11–31, 41–61, 65–85, 91–111, 117–137, 150–170, 367–387, 404–424, 428–448, 454–474, and 480–500; these read FACK…WFEM, AAIV…SGAI, GLLR…IIMT, VVML…SSLV, YVFA…QSSP, EIIL…PRSV, LFWL…LGVV, FLIG…LVLP, QSLL…GIEI, GSLG…PMTF, and LDNA…IMLI.

It belongs to the aromatic acid exporter ArAE (TC 2.A.85) family.

It is found in the cell inner membrane. Forms an efflux pump with AaeA. Could function as a metabolic relief valve, allowing to eliminate certain compounds when they accumulate to high levels in the cell. In Musicola paradisiaca (strain Ech703) (Dickeya paradisiaca), this protein is p-hydroxybenzoic acid efflux pump subunit AaeB.